The primary structure comprises 517 residues: GMP synthase [glutamine-hydrolyzing] (517 aa).

The Glutamine amidotransferase type-1 domain maps to 11–202; the sequence is KIIVLDYGSQ…AFDICKAEAN (192 aa). The active-site Nucleophile is the cysteine 88. Active-site residues include histidine 176 and glutamate 178. One can recognise a GMPS ATP-PPase domain in the interval 203–392; the sequence is WSMDDFITKQ…LGMPHALVWR (190 aa). 230-236 contacts ATP; it reads SGGVDSS.

Homodimer.

The enzyme catalyses XMP + L-glutamine + ATP + H2O = GMP + L-glutamate + AMP + diphosphate + 2 H(+). It participates in purine metabolism; GMP biosynthesis; GMP from XMP (L-Gln route): step 1/1. Its function is as follows. Catalyzes the synthesis of GMP from XMP. The sequence is that of GMP synthase [glutamine-hydrolyzing] from Lacticaseibacillus casei (strain BL23) (Lactobacillus casei).